Reading from the N-terminus, the 67-residue chain is ATP synthase F(0) complex subunit 8 (67 aa).

A helical transmembrane segment spans residues T8–M24. Position 54 is an N6-acetyllysine; alternate (K54). K54 is subject to N6-succinyllysine; alternate. K57 is subject to N6-acetyllysine.

It belongs to the ATPase protein 8 family. In terms of assembly, component of the ATP synthase complex composed at least of ATP5F1A/subunit alpha, ATP5F1B/subunit beta, ATP5MC1/subunit c (homooctomer), MT-ATP6/subunit a, MT-ATP8/subunit 8, ATP5ME/subunit e, ATP5MF/subunit f, ATP5MG/subunit g, ATP5MK/subunit k, ATP5MJ/subunit j, ATP5F1C/subunit gamma, ATP5F1D/subunit delta, ATP5F1E/subunit epsilon, ATP5PF/subunit F6, ATP5PB/subunit b, ATP5PD/subunit d, ATP5PO/subunit OSCP. ATP synthase complex consists of a soluble F(1) head domain (subunits alpha(3) and beta(3)) - the catalytic core - and a membrane F(0) domain - the membrane proton channel (subunits c, a, 8, e, f, g, k and j). These two domains are linked by a central stalk (subunits gamma, delta, and epsilon) rotating inside the F1 region and a stationary peripheral stalk (subunits F6, b, d, and OSCP). Interacts with PRICKLE3.

The protein resides in the mitochondrion membrane. Its function is as follows. Subunit 8, of the mitochondrial membrane ATP synthase complex (F(1)F(0) ATP synthase or Complex V) that produces ATP from ADP in the presence of a proton gradient across the membrane which is generated by electron transport complexes of the respiratory chain. ATP synthase complex consist of a soluble F(1) head domain - the catalytic core - and a membrane F(1) domain - the membrane proton channel. These two domains are linked by a central stalk rotating inside the F(1) region and a stationary peripheral stalk. During catalysis, ATP synthesis in the catalytic domain of F(1) is coupled via a rotary mechanism of the central stalk subunits to proton translocation. In vivo, can only synthesize ATP although its ATP hydrolase activity can be activated artificially in vitro. Part of the complex F(0) domain. The sequence is that of ATP synthase F(0) complex subunit 8 from Cricetulus griseus (Chinese hamster).